We begin with the raw amino-acid sequence, 274 residues long: MEQKKITQGDLVSMFLRSNLQQASFNFERIHGLGFCYDMIPAIKRLYPLKADQVAALKRHLVFFNTTPAVCGPVIAVTAAMEEARANGAAIDDGAINGIKVGLMGPLAGVGDPLVWGTLRPITAALGASLALSGNILGPLLFFFIFNAVRLAMKWYGLQLGFRKGVNIVSDMGGNLLQKLTEGASILGLFVMGVLVTKWTTINVPLVVSQTPGADGATVTMTVQNILDQLCPGLLALGLTLLMVRLLNKKVNPVWLIFALFGLGIIGNALGFLS.

The 270-residue stretch at 4–273 (KKITQGDLVS…GIIGNALGFL (270 aa)) folds into the PTS EIID domain. 6 helical membrane-spanning segments follow: residues 61–81 (LVFF…TAAM), 99–119 (IKVG…WGTL), 126–146 (LGAS…FFIF), 186–206 (ILGL…NVPL), 226–246 (ILDQ…MVRL), and 253–273 (PVWL…LGFL).

The protein resides in the cell inner membrane. The phosphoenolpyruvate-dependent sugar phosphotransferase system (PTS), a major carbohydrate active transport system, catalyzes the phosphorylation of incoming sugar substrates concomitant with their translocation across the cell membrane. The enzyme II SorABFM PTS system is involved in sorbose transport. The protein is PTS system sorbose-specific EIID component of Klebsiella pneumoniae.